Here is a 304-residue protein sequence, read N- to C-terminus: MWFKNLTLYRFNKPFSIETEALETALADFTFSPCGSQDVSKFGFSNALGKQGSTLVHSANNRHLICVTKEEKILPGQVIKESLEEKVALIEDEENRKLAKKEKDALKDEIITSLLPRAFSRRSQTRALILPELEMILVDSSSATKAEELLALLRKALGSLPVIPLSFKAPVESNLTQWLKDGSAPLPFEMQDEAELKSAADEGGIVRFKQQDLKEDEVLAHLETGKEVHKLALHFGQSIALLLQSDASVKRLKFSEEFRAGNDELGNEDPMARLDADFALMGSELVALMHALVSALGGLEETQA.

The protein belongs to the RdgC family.

The protein localises to the cytoplasm. The protein resides in the nucleoid. Its function is as follows. May be involved in recombination. The chain is Recombination-associated protein RdgC from Shewanella sp. (strain MR-4).